We begin with the raw amino-acid sequence, 151 residues long: Large ribosomal subunit protein bL9 (151 aa).

It belongs to the bacterial ribosomal protein bL9 family.

Functionally, binds to the 23S rRNA. This Prochlorococcus marinus (strain MIT 9312) protein is Large ribosomal subunit protein bL9.